An 89-amino-acid polypeptide reads, in one-letter code: Small ribosomal subunit protein uS15 (89 aa).

Belongs to the universal ribosomal protein uS15 family. As to quaternary structure, part of the 30S ribosomal subunit. Forms a bridge to the 50S subunit in the 70S ribosome, contacting the 23S rRNA.

In terms of biological role, one of the primary rRNA binding proteins, it binds directly to 16S rRNA where it helps nucleate assembly of the platform of the 30S subunit by binding and bridging several RNA helices of the 16S rRNA. Its function is as follows. Forms an intersubunit bridge (bridge B4) with the 23S rRNA of the 50S subunit in the ribosome. The sequence is that of Small ribosomal subunit protein uS15 from Rhizorhabdus wittichii (strain DSM 6014 / CCUG 31198 / JCM 15750 / NBRC 105917 / EY 4224 / RW1) (Sphingomonas wittichii).